A 1335-amino-acid chain; its full sequence is Regulatory-associated protein of mTOR (1335 aa).

2 positions are modified to phosphoserine: Ser44 and Ser122. Ser696 carries the post-translational modification Phosphoserine; by MAPK8. O-linked (GlcNAc) threonine glycosylation is present at Thr700. The residue at position 706 (Thr706) is a Phosphothreonine; by MAPK8. A phosphoserine; by RPS6KA1 mark is found at Ser719 and Ser721. Ser722 bears the Phosphoserine; by AMPK and RPS6KA1 mark. Ser738 carries the post-translational modification Phosphoserine. The residue at position 791 (Ser791) is a Phosphoserine; by PKA. The residue at position 792 (Ser792) is a Phosphoserine; by AMPK. Residues Ser836 and Ser855 each carry the phosphoserine modification. Residues 850 to 943 (VLDTSSLTQS…PEQTADDADD (94 aa)) form a disordered region. Residues 851–866 (LDTSSLTQSAPASPTN) show a composition bias toward polar residues. Ser859 carries the phosphoserine; by MTOR modification. Ser863 carries the post-translational modification Phosphoserine; by MAPK8, MTOR and NLK. Position 865 is a phosphothreonine (Thr865). The segment covering 874-887 (AGGSPPASSTSSSS) has biased composition (low complexity). Residue Ser877 is modified to Phosphoserine; by TBK1. Glycyl lysine isopeptide (Lys-Gly) (interchain with G-Cter in ubiquitin) cross-links involve residues Lys932 and Lys948. Ser982 is subject to Phosphoserine. WD repeat units lie at residues 1020 to 1061 (NRNP…DYFH), 1065 to 1106 (PRYT…EKNP), 1121 to 1160 (TTRG…KVQD), 1164 to 1203 (GADS…SECR), 1209 to 1249 (EHTA…SVNV), 1251 to 1291 (QIVK…NNIK), and 1299 to 1335 (QRVG…KRVR). The residue at position 1097 (Lys1097) is an N6-acetyllysine.

It belongs to the WD repeat RAPTOR family. In terms of assembly, part of the mechanistic target of rapamycin complex 1 (mTORC1) which contains MTOR, MLST8 and RPTOR. mTORC1 associates with AKT1S1/PRAS40, which inhibits its activity. mTORC1 associates with DEPTOR, which regulates its activity. mTORC1 binds to and is inhibited by FKBP12-rapamycin. Forms a complex with MTOR under both leucine-rich and -poor conditions. Interacts with (via TOS motifs) EIF4EBP1 and RPS6KB1; interaction is independent of its association with MTOR. Binds preferentially to poorly or non-phosphorylated forms of EIF4EBP1, and this binding is critical to the ability of MTOR to catalyze phosphorylation. Interacts with ULK1 in a nutrient-dependent manner; the interaction is reduced during starvation. Interacts with GTP-bound form of RagA/RRAGA or RagB/RRAGB and GDP-bound form of RagC/RRAGC or RagD/RRAGD, promoting recruitment of mTORC1 to the lysosomes. Interacts (when phosphorylated by AMPK) with 14-3-3 protein, leading to inhibition of its activity. Interacts with SPAG5; SPAG5 competes with MTOR for RPTOR-binding, resulting in decreased mTORC1 formation. Interacts with WAC; WAC positively regulates MTOR activity by promoting the assembly of the TTT complex composed of TELO2, TTI1 and TTI2 and the RUVBL complex composed of RUVBL1 and RUVBL2 into the TTT-RUVBL complex which leads to the dimerization of the mTORC1 complex and its subsequent activation. Interacts with G3BP1. The complex formed with G3BP1 and SPAG5 is increased by oxidative stress. Interacts with HTR6. Interacts with PIH1D1. Interacts with LARP1. Interacts with BRAT1. Interacts with SIK3. Interacts with SLC38A7; this interaction mediates the recruitment of mTORC1 to the lysosome and its subsequent activation. As to quaternary structure, (Microbial infection) Interacts with vaccinia virus protein F17; this interaction dysregulates mTOR. Insulin-stimulated phosphorylation at Ser-863 by MTOR and MAPK8 regulates mTORC1 activity. Phosphorylated at Ser-863 by NLK in response to stress, disrupting the interaction with small GTPases Rag (RagA/RRAGA, RagB/RRAGB, RagC/RRAGC and/or RagD/RRAGD), thereby preventing lysosome recruitment and activation of the mTORC1 complex. Osmotic stress also induces phosphorylation at Ser-696, Thr-706 and Ser-863 by MAPK8. Ser-863 phosphorylation is required for phosphorylation at Ser-855 and Ser-859. In response to nutrient limitation, phosphorylated at Ser-722 and Ser-792 by AMPK; phosphorylation promotes interaction with 14-3-3 proteins, leading to negative regulation of the mTORC1 complex. Phosphorylation at Ser-722 and Ser-792 by AMPK in response to glucose starvation inhibits O-GlcNAcylation by OGT and subsequent activation of mTORC1. In response to growth factors, phosphorylated at Ser-719, Ser-721 and Ser-722 by RPS6KA1, which stimulates mTORC1 activity. Phosphorylation at Ser-791 by PKA downstream of cAMP inhibits the mTORC1 complex. Phosphorylated at Ser-877 by TBK1, leading to negative regulation of the mTORC1 complex. In terms of processing, O-GlcNAcylated by OGT upon glucose sufficiency, promoting interaction with small GTPases Rag (RagA/RRAGA, RagB/RRAGB, RagC/RRAGC and/or RagD/RRAGD) and subsequent recruitment of mTORC1 to lysosomal membranes, leading to activation of the mTORC1 complex. Phosphorylation at Ser-722 and Ser-792 by AMPK in response to glucose starvation inhibits O-GlcNAcylation. Post-translationally, acetylation at Lys-1097 by EP300/p300 in response to leucine metabolite acetyl-coA promotes its activity, leading to activation of the mTORC1 complex. Acetylation is decreased in response to fasting. Ubiquitinated, leading to its degradation by the proteasome. Deubiquitinated by OTUB1 via a non-catalytic mechanism. Ubiquitinated by an E3 ubiquitin ligase complex containing VHL. Highly expressed in skeletal muscle, and in a lesser extent in brain, lung, small intestine, kidney and placenta. As to expression, widely expressed, with highest levels in nasal mucosa and pituitary and lowest in spleen.

The protein resides in the lysosome membrane. The protein localises to the cytoplasm. It is found in the cytoplasmic granule. Its function is as follows. Component of the mechanistic target of rapamycin complex 1 (mTORC1), an evolutionarily conserved central nutrient sensor that stimulates anabolic reactions and macromolecule biosynthesis to promote cellular biomass generation and growth. In response to nutrients, growth factors or amino acids, mTORC1 is recruited to the lysosome membrane and promotes protein, lipid and nucleotide synthesis by phosphorylating several substrates, such as ribosomal protein S6 kinase (RPS6KB1 and RPS6KB2) and EIF4EBP1 (4E-BP1). In the same time, it inhibits catabolic pathways by phosphorylating the autophagy initiation components ULK1 and ATG13, as well as transcription factor TFEB, a master regulators of lysosomal biogenesis and autophagy. The mTORC1 complex is inhibited in response to starvation and amino acid depletion. Within the mTORC1 complex, RPTOR acts both as a molecular adapter, which (1) mediates recruitment of mTORC1 to lysosomal membranes via interaction with small GTPases Rag (RagA/RRAGA, RagB/RRAGB, RagC/RRAGC and/or RagD/RRAGD), and a (2) substrate-specific adapter, which promotes substrate specificity by binding to TOS motif-containing proteins and direct them towards the active site of the MTOR kinase domain for phosphorylation. mTORC1 complex regulates many cellular processes, such as odontoblast and osteoclast differentiation or neuronal transmission. mTORC1 complex in excitatory neuronal transmission is required for the prosocial behavior induced by the psychoactive substance lysergic acid diethylamide (LSD). In Homo sapiens (Human), this protein is Regulatory-associated protein of mTOR.